A 774-amino-acid polypeptide reads, in one-letter code: 5-methyltetrahydropteroyltriglutamate--homocysteine methyltransferase (774 aa).

Residues 23–26 (RELK) and Lys123 each bind 5-methyltetrahydropteroyltri-L-glutamate. Residues 446 to 448 (IGS) and Glu499 contribute to the L-homocysteine site. L-methionine contacts are provided by residues 446–448 (IGS) and Glu499. 5-methyltetrahydropteroyltri-L-glutamate contacts are provided by residues 530 to 531 (RC) and Trp576. An L-homocysteine-binding site is contributed by Asp614. L-methionine is bound at residue Asp614. Residue Glu620 coordinates 5-methyltetrahydropteroyltri-L-glutamate. Zn(2+)-binding residues include His656, Cys658, and Glu680. The active-site Proton donor is the His709. Position 741 (Cys741) interacts with Zn(2+).

Belongs to the vitamin-B12 independent methionine synthase family. Zn(2+) serves as cofactor.

The enzyme catalyses 5-methyltetrahydropteroyltri-L-glutamate + L-homocysteine = tetrahydropteroyltri-L-glutamate + L-methionine. The protein operates within amino-acid biosynthesis; L-methionine biosynthesis via de novo pathway; L-methionine from L-homocysteine (MetE route): step 1/1. Catalyzes the transfer of a methyl group from 5-methyltetrahydrofolate to homocysteine resulting in methionine formation. The chain is 5-methyltetrahydropteroyltriglutamate--homocysteine methyltransferase from Aliivibrio fischeri (strain ATCC 700601 / ES114) (Vibrio fischeri).